A 253-amino-acid polypeptide reads, in one-letter code: Phosphoribosylaminoimidazole-succinocarboxamide synthase (253 aa).

This sequence belongs to the SAICAR synthetase family.

The catalysed reaction is 5-amino-1-(5-phospho-D-ribosyl)imidazole-4-carboxylate + L-aspartate + ATP = (2S)-2-[5-amino-1-(5-phospho-beta-D-ribosyl)imidazole-4-carboxamido]succinate + ADP + phosphate + 2 H(+). The protein operates within purine metabolism; IMP biosynthesis via de novo pathway; 5-amino-1-(5-phospho-D-ribosyl)imidazole-4-carboxamide from 5-amino-1-(5-phospho-D-ribosyl)imidazole-4-carboxylate: step 1/2. The polypeptide is Phosphoribosylaminoimidazole-succinocarboxamide synthase (Dinoroseobacter shibae (strain DSM 16493 / NCIMB 14021 / DFL 12)).